Reading from the N-terminus, the 149-residue chain is UPF0178 protein Lmo1456 (149 aa).

This sequence belongs to the UPF0178 family.

This Listeria monocytogenes serovar 1/2a (strain ATCC BAA-679 / EGD-e) protein is UPF0178 protein Lmo1456.